The primary structure comprises 315 residues: tRNA dimethylallyltransferase (315 aa).

ATP is bound at residue 11–18 (GPTASGKS). 13-18 (TASGKS) serves as a coordination point for substrate. Interaction with substrate tRNA stretches follow at residues 36 to 39 (DSMQ) and 160 to 164 (QRLIR).

Belongs to the IPP transferase family. As to quaternary structure, monomer. Mg(2+) is required as a cofactor.

It carries out the reaction adenosine(37) in tRNA + dimethylallyl diphosphate = N(6)-dimethylallyladenosine(37) in tRNA + diphosphate. Functionally, catalyzes the transfer of a dimethylallyl group onto the adenine at position 37 in tRNAs that read codons beginning with uridine, leading to the formation of N6-(dimethylallyl)adenosine (i(6)A). The polypeptide is tRNA dimethylallyltransferase (Rickettsia bellii (strain OSU 85-389)).